The chain runs to 70 residues: Large ribosomal subunit protein uL29 (70 aa).

It belongs to the universal ribosomal protein uL29 family.

The sequence is that of Large ribosomal subunit protein uL29 from Prochlorococcus marinus (strain MIT 9211).